The following is a 597-amino-acid chain: Nuclear receptor subfamily 4 group A member 1 (597 aa).

The tract at residues 1-22 is disordered; the sequence is MPCIQAQYGTPATSPGPRDHLT. Residues 170–465 form a required for nuclear import region; the sequence is RVWTEQLPKA…PGEGKLIFCS (296 aa). A DNA-binding region (nuclear receptor) is located at residues 263–338; the sequence is EGRCAVCGDN…VGMVKEVVRT (76 aa). 2 NR C4-type zinc fingers span residues 266–286 and 302–326; these read CAVC…CEGC and CLAN…FQKC. Positions 267-353 are required for binding NBRE-containing DNA; it reads AVCGDNASCQ…RRGRLPSKPK (87 aa). Residues 298–360 are required for the interaction with RXRA; that stretch reads AKYICLANKD…KPKQPPDASP (63 aa). Ser340 carries the phosphoserine; by PKA modification. The interval 341-360 is disordered; the sequence is LKGRRGRLPSKPKQPPDASP. At Ser350 the chain carries Phosphoserine; by PKA, RPS6KA1 and RPS6KA3. Residues 359–594 enclose the NR LBD domain; sequence SPTNLLTSLI…PIVDKIFMDT (236 aa). The binds lipopolysaccharide stretch occupies residues 520–543; the sequence is PRRVEELQNRIASCLKEHMAAVAG. Residues 583–594 form an AF-2 region; that stretch reads PPPIVDKIFMDT.

This sequence belongs to the nuclear hormone receptor family. NR4 subfamily. In terms of assembly, binds the NGFI-B response element (NBRE) as a monomer. Binds the Nur response element (NurRE), consisting of two inverse NBRE-related octanucleotide repeats separated by 6 base-pairs, as a dimer. Interacts (via N-terminus) with NLRP3 (via LRR repeat domain); the interaction is direct, requires binding of NR4A1/Nur77 to NBRE-containing dsDNA and lipopolysaccharide, and leads to non-canonical NLRP3 inflammasome activation. Interacts with GADD45GIP1. Interacts with STK11. Interacts with IFI27. Heterodimer (via DNA-binding domain) with RXRA (via C-terminus); DNA-binding of the heterodimer is enhanced by 9-cis retinoic acid. Competes for the RXRA interaction with EP300 and thereby attenuates EP300 mediated acetylation of RXRA. Interacts with NCOA1. Interacts with NCOA2. Interacts with NCOA3. The cofactor is Zn(2+). In terms of processing, phosphorylated at Ser-350 by RPS6KA1 and RPS6KA3 in response to mitogenic or stress stimuli. Phosphorylation of Ser-350 results in decrease in NBRE binding while phosphorylation of Ser-340 has little effect on it. Post-translationally, acetylated by p300/CBP, acetylation increases stability. Deacetylated by HDAC1. As to expression, expressed in lung, brain and superior cervical ganglia. High levels are seen in the adrenal tissue.

The protein resides in the nucleus. It is found in the cytoplasm. Its subcellular location is the cytosol. It localises to the mitochondrion. Functionally, orphan nuclear receptor. Binds the NGFI-B response element (NBRE) 5'-AAAGGTCA-3'. Binds 9-cis-retinoic acid outside of its ligand-binding (NR LBD) domain. Participates in energy homeostasis by sequestrating the kinase STK11 in the nucleus, thereby attenuating cytoplasmic AMPK activation. Regulates the inflammatory response in macrophages by regulating metabolic adaptations during inflammation, including repressing the transcription of genes involved in the citric acid cycle (TCA). Inhibits NF-kappa-B signaling by binding to low-affinity NF-kappa-B binding sites, such as at the IL2 promoter. May act concomitantly with NR4A2 in regulating the expression of delayed-early genes during liver regeneration. Plays a role in the vascular response to injury. Its function is as follows. In the cytosol, upon its detection of both bacterial lipopolysaccharide (LPS) and NBRE-containing mitochondrial DNA released by GSDMD pores during pyroptosis, it promotes non-canonical NLRP3 inflammasome activation by stimulating association of NLRP3 and NEK7. The chain is Nuclear receptor subfamily 4 group A member 1 (Nr4a1) from Rattus norvegicus (Rat).